We begin with the raw amino-acid sequence, 110 residues long: Phosphoribosyl-AMP cyclohydrolase (110 aa).

Residue Asp-80 coordinates Mg(2+). Cys-81 is a Zn(2+) binding site. The Mg(2+) site is built by Asp-82 and Asp-84. Residues Cys-97 and Cys-104 each coordinate Zn(2+).

This sequence belongs to the PRA-CH family. Homodimer. Mg(2+) serves as cofactor. The cofactor is Zn(2+).

It localises to the cytoplasm. The enzyme catalyses 1-(5-phospho-beta-D-ribosyl)-5'-AMP + H2O = 1-(5-phospho-beta-D-ribosyl)-5-[(5-phospho-beta-D-ribosylamino)methylideneamino]imidazole-4-carboxamide. Its pathway is amino-acid biosynthesis; L-histidine biosynthesis; L-histidine from 5-phospho-alpha-D-ribose 1-diphosphate: step 3/9. Catalyzes the hydrolysis of the adenine ring of phosphoribosyl-AMP. The protein is Phosphoribosyl-AMP cyclohydrolase of Clostridium botulinum (strain ATCC 19397 / Type A).